We begin with the raw amino-acid sequence, 305 residues long: Acetyl-coenzyme A carboxylase carboxyl transferase subunit alpha (305 aa).

The 248-residue stretch at 33–280 (AKLESSTALS…KEQILKDLAD (248 aa)) folds into the CoA carboxyltransferase C-terminal domain.

Belongs to the AccA family. As to quaternary structure, acetyl-CoA carboxylase is a heterohexamer composed of biotin carboxyl carrier protein (AccB), biotin carboxylase (AccC) and two subunits each of ACCase subunit alpha (AccA) and ACCase subunit beta (AccD).

It localises to the cytoplasm. It carries out the reaction N(6)-carboxybiotinyl-L-lysyl-[protein] + acetyl-CoA = N(6)-biotinyl-L-lysyl-[protein] + malonyl-CoA. It participates in lipid metabolism; malonyl-CoA biosynthesis; malonyl-CoA from acetyl-CoA: step 1/1. Its function is as follows. Component of the acetyl coenzyme A carboxylase (ACC) complex. First, biotin carboxylase catalyzes the carboxylation of biotin on its carrier protein (BCCP) and then the CO(2) group is transferred by the carboxyltransferase to acetyl-CoA to form malonyl-CoA. In Treponema denticola (strain ATCC 35405 / DSM 14222 / CIP 103919 / JCM 8153 / KCTC 15104), this protein is Acetyl-coenzyme A carboxylase carboxyl transferase subunit alpha.